The sequence spans 600 residues: Keratin, type II cuticular Hb4 (600 aa).

Residues 1–165 (MSCRSYRVSS…PNAQRVKKDE (165 aa)) form a head region. Residues 165 to 476 (EKEQIKTLNN…RLLEGEESRL (312 aa)) form the IF rod domain. The tract at residues 166-200 (KEQIKTLNNKFASFIDKVRFLEQQNKLLETKWSFL) is coil 1A. The linker 1 stretch occupies residues 201–210 (QEQKCIRSNL). Residues 211–311 (EPLFESYITN…YMEEIQLLQS (101 aa)) form a coil 1B region. Residues 312-328 (HISETSVIVKMDNSRDL) form a linker 12 region. Positions 329-472 (NLDGIIAEVK…ATYRRLLEGE (144 aa)) are coil 2. A tail region spans residues 473–600 (ESRLCEGVGP…STTTSCRTKY (128 aa)).

The protein belongs to the intermediate filament family. In terms of assembly, heterotetramer of two type I and two type II keratins. As to expression, expressed in the hair follicles.

This is Keratin, type II cuticular Hb4 (KRT84) from Homo sapiens (Human).